The following is a 226-amino-acid chain: ATP-dependent dethiobiotin synthetase BioD (226 aa).

D13–V18 contributes to the ATP binding site. T17 provides a ligand contact to Mg(2+). Residue K38 is part of the active site. ATP contacts are provided by residues D55, E116–G119, and N176–R177. Positions 55 and 116 each coordinate Mg(2+).

It belongs to the dethiobiotin synthetase family. As to quaternary structure, homodimer. The cofactor is Mg(2+).

The protein localises to the cytoplasm. The enzyme catalyses (7R,8S)-7,8-diammoniononanoate + CO2 + ATP = (4R,5S)-dethiobiotin + ADP + phosphate + 3 H(+). It participates in cofactor biosynthesis; biotin biosynthesis; biotin from 7,8-diaminononanoate: step 1/2. Catalyzes a mechanistically unusual reaction, the ATP-dependent insertion of CO2 between the N7 and N8 nitrogen atoms of 7,8-diaminopelargonic acid (DAPA, also called 7,8-diammoniononanoate) to form a ureido ring. In Aliivibrio fischeri (strain MJ11) (Vibrio fischeri), this protein is ATP-dependent dethiobiotin synthetase BioD.